We begin with the raw amino-acid sequence, 420 residues long: Annetocin receptor (420 aa).

At 1-54 the chain is on the extracellular side; it reads MEMDDDEAILLDDIYALASTPNQTIVTSSFPQTVSPGFLARRNEALAMVEVAVQ. The N-linked (GlcNAc...) asparagine glycan is linked to N22. The helical transmembrane segment at 55 to 75 threads the bilayer; it reads STILILTVVGNAAVLAMIVSL. Residues 76 to 83 lie on the Cytoplasmic side of the membrane; that stretch reads SRHKDLGR. A helical membrane pass occupies residues 84 to 104; sequence MYTMIGHLSCADLFVAIFNLL. Residues 105-124 are Extracellular-facing; that stretch reads PQLLWDVTHRFRGGRVLCKL. Residues C122 and C201 are joined by a disulfide bond. The chain crosses the membrane as a helical span at residues 125–145; it reads VKYVQVVAMYASAYVLMSTAV. Over 146–166 the chain is Cytoplasmic; sequence DRYTAICHPMRSHTWTSTTAH. Residues 167 to 187 traverse the membrane as a helical segment; that stretch reads YLVIGAWVLALVFAVPQLVIF. Over 188-212 the chain is Extracellular; sequence DYVEVVPGSGVYDCVDHFRPRWTLP. A helical transmembrane segment spans residues 213–233; the sequence is VYITWFALAVYVIPLVVLATI. Residues 234-328 lie on the Cytoplasmic side of the membrane; sequence YLRICVVVWK…KTKTVKLTLT (95 aa). Residues 329–349 form a helical membrane-spanning segment; sequence VVISYLVCWAPFFVSHIWSAW. Topologically, residues 350–360 are extracellular; sequence DPHAPFEGTEM. The helical transmembrane segment at 361-381 threads the bilayer; sequence VITLLLGSLNSCINPWIYLAF. Residues 382–420 lie on the Cytoplasmic side of the membrane; the sequence is SDQLRRKVTQCCPRSWGQRPSTLSHDSTDFRSGSRPTHS. The disordered stretch occupies residues 397–420; that stretch reads WGQRPSTLSHDSTDFRSGSRPTHS. Polar residues predominate over residues 399–420; it reads QRPSTLSHDSTDFRSGSRPTHS.

Belongs to the G-protein coupled receptor 1 family. Vasopressin/oxytocin receptor subfamily. Nephridia in clitellum region.

Its subcellular location is the cell membrane. Its function is as follows. Receptor for annetocin. Activation by annetocin may induce egg-laying behavior through calcium-dependent signaling. This is Annetocin receptor from Eisenia fetida (Red wiggler worm).